A 180-amino-acid polypeptide reads, in one-letter code: Signal peptidase complex subunit 3 (180 aa).

The Cytoplasmic segment spans residues 1–12 (MHNLLSRANALL). Residues 13–33 (AFTLWVMAAVTAACFLSTVFL) form a helical; Signal-anchor for type II membrane protein membrane-spanning segment. The Lumenal segment spans residues 34 to 180 (DYTVPTKLTV…PTTYTTTRRS (147 aa)). Asparagine 141 carries an N-linked (GlcNAc...) asparagine glycan.

The protein belongs to the SPCS3 family. As to quaternary structure, component of the signal peptidase complex (SPC) composed of a catalytic subunit sec-11 and three accessory subunits spcs-1, spcs-2 and spcs-3. The complex induces a local thinning of the ER membrane which is used to measure the length of the signal peptide (SP) h-region of protein substrates. This ensures the selectivity of the complex towards h-regions shorter than 18-20 amino acids.

It is found in the endoplasmic reticulum membrane. Functionally, essential component of the signal peptidase complex (SPC) which catalyzes the cleavage of N-terminal signal sequences from nascent proteins as they are translocated into the lumen of the endoplasmic reticulum. Essential for the SPC catalytic activity, possibly by stabilizing and positioning the active center of the complex close to the lumenal surface. This Caenorhabditis elegans protein is Signal peptidase complex subunit 3.